A 451-amino-acid polypeptide reads, in one-letter code: Phosphoglucosamine mutase (451 aa).

The active-site Phosphoserine intermediate is Ser-102. Positions 102, 243, 245, and 247 each coordinate Mg(2+). Ser-102 is modified (phosphoserine).

This sequence belongs to the phosphohexose mutase family. Requires Mg(2+) as cofactor. Activated by phosphorylation.

The enzyme catalyses alpha-D-glucosamine 1-phosphate = D-glucosamine 6-phosphate. Catalyzes the conversion of glucosamine-6-phosphate to glucosamine-1-phosphate. This chain is Phosphoglucosamine mutase, found in Chelativorans sp. (strain BNC1).